Consider the following 364-residue polypeptide: Carbamoyl phosphate synthase pyrimidine-specific small chain (364 aa).

The CPSase stretch occupies residues 1–171; sequence MKRRLVLENG…AYPSPGRGKR (171 aa). L-glutamine-binding residues include S45, G219, and G221. One can recognise a Glutamine amidotransferase type-1 domain in the interval 171–356; sequence RIVLVDFGMK…IEMIETTEKE (186 aa). The active-site Nucleophile is the C246. Residues L247, Q250, N288, G290, and Y291 each contribute to the L-glutamine site. Active-site residues include H329 and E331.

This sequence belongs to the CarA family. Composed of two chains; the small (or glutamine) chain promotes the hydrolysis of glutamine to ammonia, which is used by the large (or ammonia) chain to synthesize carbamoyl phosphate. Tetramer of heterodimers (alpha,beta)4. Interacts with BrxC.

It catalyses the reaction hydrogencarbonate + L-glutamine + 2 ATP + H2O = carbamoyl phosphate + L-glutamate + 2 ADP + phosphate + 2 H(+). It carries out the reaction L-glutamine + H2O = L-glutamate + NH4(+). Its pathway is pyrimidine metabolism; UMP biosynthesis via de novo pathway; (S)-dihydroorotate from bicarbonate: step 1/3. Its function is as follows. Small subunit of the glutamine-dependent carbamoyl phosphate synthetase (CPSase). CPSase catalyzes the formation of carbamoyl phosphate from the ammonia moiety of glutamine, carbonate, and phosphate donated by ATP, constituting the first step of the biosynthetic pathway leading to arginine and/or urea. The small subunit (glutamine amidotransferase) binds and cleaves glutamine to supply the large subunit with the substrate ammonia. This chain is Carbamoyl phosphate synthase pyrimidine-specific small chain, found in Bacillus subtilis (strain 168).